The chain runs to 337 residues: Diacylglycerol O-acyltransferase 2-like protein 6 (337 aa).

2 helical membrane-spanning segments follow: residues 22–42 (MPVY…FLVF) and 102–122 (YIIA…NFAT).

The protein belongs to the diacylglycerol acyltransferase family.

Its subcellular location is the endoplasmic reticulum membrane. The enzyme catalyses 1,2-di-(9Z-octadecenoyl)-sn-glycerol + (9Z)-octadecenoyl-CoA = 1,2,3-tri-(9Z-octadecenoyl)-glycerol + CoA. Diglyceride acyltransferase that uses fatty acyl-CoA as substrate. Particularly active with oleate as a substrate. Has no wax synthase activity to produce wax esters. The sequence is that of Diacylglycerol O-acyltransferase 2-like protein 6 (DGAT2L6) from Bos taurus (Bovine).